The sequence spans 250 residues: MELKVDTHTHTYASGHAYSTLIENAKSAKENGLDMFCTTDHAESMPGAPHYWFFSNQKILPRFLEGVAIIRGVESNIMNTQGDIDIPESVDRNLDWVIASFHEPVFRPADSATHTEALLNIIKNGRVDALGHLGNPNFDFDFEVVLKCAKEHYVAIEINNTTLKGNSRVGSVDRCHQIAQIGKDLGVFFTTGSDAHFCHDVGNLSLVSELMDRVGIDSSKVITHSAQQFLAFLELRGRKPIAEYDEIRNA.

His8, His10, His16, His41, Glu74, His102, His132, Asp194, and His196 together coordinate Zn(2+).

Belongs to the PHP family. Zn(2+) is required as a cofactor.

The sequence is that of Probable phosphatase VIBHAR_04983 from Vibrio campbellii (strain ATCC BAA-1116).